We begin with the raw amino-acid sequence, 1292 residues long: HMG domain-containing protein 3 (1292 aa).

The segment at residues 42-110 (TKKPRSAYLL…GLDPNSKLSA (69 aa)) is a DNA-binding region (HMG box). Disordered regions lie at residues 363 to 391 (SKGS…KLTL), 448 to 505 (VQPE…GRAR), and 562 to 588 (KQLG…NRTS). Positions 370–391 (RNQQPVTTEQNSSKENASKLTL) are enriched in polar residues. The segment covering 467-478 (PTPSEGTSTSSP) has biased composition (low complexity). Residues 562-572 (KQLGQPIQQPS) show a composition bias toward polar residues.

It localises to the nucleus. In Homo sapiens (Human), this protein is HMG domain-containing protein 3.